A 391-amino-acid chain; its full sequence is Digeranylgeranylglycerophospholipid reductase (391 aa).

10 residues coordinate FAD: Gly19, Asp38, Cys49, Ala50, Ala52, Arg99, Val123, Asp279, Gly291, and Ile292. Residue Val369 coordinates a 2,3-bis-O-(geranylgeranyl)-sn-glycerol 1-phospholipid.

The protein belongs to the geranylgeranyl reductase family. DGGGPL reductase subfamily. FAD serves as cofactor.

The enzyme catalyses a 2,3-bis-O-phytanyl-sn-glycerol 1-phospholipid + 8 A = a 2,3-bis-O-(geranylgeranyl)-sn-glycerol 1-phospholipid + 8 AH2. It carries out the reaction 2,3-bis-O-(phytanyl)-sn-glycerol 1-phosphate + 8 A = 2,3-bis-O-(geranylgeranyl)-sn-glycerol 1-phosphate + 8 AH2. The catalysed reaction is CDP-2,3-bis-O-(geranylgeranyl)-sn-glycerol + 8 AH2 = CDP-2,3-bis-O-(phytanyl)-sn-glycerol + 8 A. It catalyses the reaction archaetidylserine + 8 AH2 = 2,3-bis-O-phytanyl-sn-glycero-3-phospho-L-serine + 8 A. It participates in membrane lipid metabolism; glycerophospholipid metabolism. Is involved in the reduction of 2,3-digeranylgeranylglycerophospholipids (unsaturated archaeols) into 2,3-diphytanylglycerophospholipids (saturated archaeols) in the biosynthesis of archaeal membrane lipids. Catalyzes the formation of archaetidic acid (2,3-di-O-phytanyl-sn-glyceryl phosphate) from 2,3-di-O-geranylgeranylglyceryl phosphate (DGGGP) via the hydrogenation of each double bond of the isoprenoid chains. Is also probably able to reduce double bonds of geranyl groups in CDP-2,3-bis-O-(geranylgeranyl)-sn-glycerol and archaetidylserine, thus acting at various stages in the biosynthesis of archaeal membrane lipids. In Methanococcus aeolicus (strain ATCC BAA-1280 / DSM 17508 / OCM 812 / Nankai-3), this protein is Digeranylgeranylglycerophospholipid reductase.